We begin with the raw amino-acid sequence, 1097 residues long: DNA polymerase catalytic subunit (1097 aa).

A disordered region spans residues 1069–1097 (RGGDDSDGGDSEKENMDTERSSSHEAMET). Over residues 1078-1097 (DSEKENMDTERSSSHEAMET) the composition is skewed to basic and acidic residues.

Belongs to the DNA polymerase type-B family.

It is found in the host nucleus. The catalysed reaction is DNA(n) + a 2'-deoxyribonucleoside 5'-triphosphate = DNA(n+1) + diphosphate. The sequence is that of DNA polymerase catalytic subunit (UL54) from Murid herpesvirus 1 (strain Smith) (MuHV-1).